The following is a 632-amino-acid chain: PWWP domain-containing protein 5 (632 aa).

One can recognise a PWWP domain in the interval 97 to 158; that stretch reads DSDLVWAKLR…ASQIKPFHQN (62 aa). Positions 310 to 452 are disordered; that stretch reads RKTDYKDNAE…AERKISSPDE (143 aa). Basic and acidic residues-rich tracts occupy residues 313–326, 339–364, 371–383, and 425–449; these read DYKDNAEQTKEKTL, STEKLDGKSHSEKKRKVESSESGKSE, QQKEDSVSKHSNE, and KSTEVENEKTKKPRHQELAERKISS. The Nuclear localization signal motif lies at 352–359; that stretch reads KRKVESSE.

This sequence belongs to the PDP family. Component of the PRC2 (polycomb repressive complex 2) complex which regulates histone methylation on histone H3K27.

Its subcellular location is the nucleus. Functionally, may influence gene expression by regulating the function of the PRC2 complex and modulating H3K27me3 level. This chain is PWWP domain-containing protein 5, found in Arabidopsis thaliana (Mouse-ear cress).